Reading from the N-terminus, the 564-residue chain is Dihydroxy-acid dehydratase (564 aa).

Basic residues predominate over residues 1–10; it reads MTDTRTKRRM. Positions 1–23 are disordered; the sequence is MTDTRTKRRMNWNSHHITQGDER. Cys57 contributes to the [2Fe-2S] cluster binding site. Asp89 lines the Mg(2+) pocket. Residue Cys130 coordinates [2Fe-2S] cluster. The Mg(2+) site is built by Asp131 and Lys132. Lys132 is subject to N6-carboxylysine. Cys202 provides a ligand contact to [2Fe-2S] cluster. Glu454 contacts Mg(2+). Catalysis depends on Ser480, which acts as the Proton acceptor.

The protein belongs to the IlvD/Edd family. As to quaternary structure, homodimer. It depends on [2Fe-2S] cluster as a cofactor. Mg(2+) is required as a cofactor.

The catalysed reaction is (2R)-2,3-dihydroxy-3-methylbutanoate = 3-methyl-2-oxobutanoate + H2O. It catalyses the reaction (2R,3R)-2,3-dihydroxy-3-methylpentanoate = (S)-3-methyl-2-oxopentanoate + H2O. Its pathway is amino-acid biosynthesis; L-isoleucine biosynthesis; L-isoleucine from 2-oxobutanoate: step 3/4. The protein operates within amino-acid biosynthesis; L-valine biosynthesis; L-valine from pyruvate: step 3/4. Functionally, functions in the biosynthesis of branched-chain amino acids. Catalyzes the dehydration of (2R,3R)-2,3-dihydroxy-3-methylpentanoate (2,3-dihydroxy-3-methylvalerate) into 2-oxo-3-methylpentanoate (2-oxo-3-methylvalerate) and of (2R)-2,3-dihydroxy-3-methylbutanoate (2,3-dihydroxyisovalerate) into 2-oxo-3-methylbutanoate (2-oxoisovalerate), the penultimate precursor to L-isoleucine and L-valine, respectively. This Deinococcus geothermalis (strain DSM 11300 / CIP 105573 / AG-3a) protein is Dihydroxy-acid dehydratase.